Consider the following 358-residue polypeptide: UDP-N-acetylglucosamine--N-acetylmuramyl-(pentapeptide) pyrophosphoryl-undecaprenol N-acetylglucosamine transferase (358 aa).

Residues 13 to 15 (TAG), arginine 166, serine 196, and glutamine 291 contribute to the UDP-N-acetyl-alpha-D-glucosamine site.

It belongs to the glycosyltransferase 28 family. MurG subfamily.

The protein resides in the cell membrane. It catalyses the reaction di-trans,octa-cis-undecaprenyl diphospho-N-acetyl-alpha-D-muramoyl-L-alanyl-D-glutamyl-meso-2,6-diaminopimeloyl-D-alanyl-D-alanine + UDP-N-acetyl-alpha-D-glucosamine = di-trans,octa-cis-undecaprenyl diphospho-[N-acetyl-alpha-D-glucosaminyl-(1-&gt;4)]-N-acetyl-alpha-D-muramoyl-L-alanyl-D-glutamyl-meso-2,6-diaminopimeloyl-D-alanyl-D-alanine + UDP + H(+). It functions in the pathway cell wall biogenesis; peptidoglycan biosynthesis. Cell wall formation. Catalyzes the transfer of a GlcNAc subunit on undecaprenyl-pyrophosphoryl-MurNAc-pentapeptide (lipid intermediate I) to form undecaprenyl-pyrophosphoryl-MurNAc-(pentapeptide)GlcNAc (lipid intermediate II). The sequence is that of UDP-N-acetylglucosamine--N-acetylmuramyl-(pentapeptide) pyrophosphoryl-undecaprenol N-acetylglucosamine transferase from Clostridium botulinum (strain Alaska E43 / Type E3).